A 175-amino-acid chain; its full sequence is Gamma-crystallin B (175 aa).

Beta/gamma crystallin 'Greek key' domains follow at residues 2–40 (GKIT…RVES) and 41–83 (GCWM…CLIP). The connecting peptide stretch occupies residues 84–88 (PHSGA). Beta/gamma crystallin 'Greek key' domains are found at residues 89-129 (YRMK…NVLE) and 130-172 (GSWI…RRVM).

Belongs to the beta/gamma-crystallin family. As to quaternary structure, monomer.

Functionally, crystallins are the dominant structural components of the vertebrate eye lens. This is Gamma-crystallin B (CRYGB) from Homo sapiens (Human).